The sequence spans 290 residues: Virginiamycin B lyase (290 aa).

His226 contacts substrate. Glu265 serves as a coordination point for Mg(2+). His267 (proton acceptor) is an active-site residue. Glu282 contributes to the Mg(2+) binding site.

The protein belongs to the Vgb family. As to quaternary structure, monomer. The cofactor is Mg(2+).

Its function is as follows. Inactivates the type B streptogramin antibiotics by linearizing the lactone ring at the ester linkage, generating a free phenylglycine carboxylate and converting the threonyl moiety into 2-amino-butenoic acid. In Mycolicibacterium vanbaalenii (strain DSM 7251 / JCM 13017 / BCRC 16820 / KCTC 9966 / NRRL B-24157 / PYR-1) (Mycobacterium vanbaalenii), this protein is Virginiamycin B lyase.